The following is a 350-amino-acid chain: Galactokinase (350 aa).

14–17 serves as a coordination point for substrate; the sequence is EHTD. Residues serine 46 and 98–104 contribute to the ATP site; that span reads GSGLSSS. 2 residues coordinate Mg(2+): serine 104 and glutamate 136. Aspartate 148 serves as the catalytic Proton acceptor. Residue tyrosine 197 participates in substrate binding.

Belongs to the GHMP kinase family. GalK subfamily.

Its subcellular location is the cytoplasm. It carries out the reaction alpha-D-galactose + ATP = alpha-D-galactose 1-phosphate + ADP + H(+). Its pathway is carbohydrate metabolism; galactose metabolism. In terms of biological role, catalyzes the transfer of the gamma-phosphate of ATP to D-galactose to form alpha-D-galactose-1-phosphate (Gal-1-P). In Thermococcus kodakarensis (strain ATCC BAA-918 / JCM 12380 / KOD1) (Pyrococcus kodakaraensis (strain KOD1)), this protein is Galactokinase.